Consider the following 483-residue polypeptide: PAT complex subunit CCDC47 (483 aa).

A signal peptide spans 1–20 (MKGFHAFCVILLIFGSVSEA). The Cytoplasmic portion of the chain corresponds to 21–135 (KFDDFEDEED…PAHLQNSWES (115 aa)). Residues 44–118 (DVAEDSVTES…PDTSSSKSKD (75 aa)) form a disordered region. The span at 60 to 104 (TEDDEDETTVELEGQDESQEGDFEDADTQEGDTESEPYDDEEFEG) shows a compositional bias: acidic residues. Over residues 105-118 (YEDKPDTSSSKSKD) the composition is skewed to basic and acidic residues. A helical transmembrane segment spans residues 136–156 (YYLEILMVTGLLAYIMNYIIG). The Lumenal segment spans residues 157 to 483 (KNKNSRLAQA…KMKQIKVKAM (327 aa)). An N-linked (GlcNAc...) asparagine glycan is attached at N178. The tract at residues 424–483 (QRQEAAQSRREEKKRAEKERIMNEEDPEKQRRLEEAALRREQKKLEKKQMKMKQIKVKAM) is disordered. Over residues 430–472 (QSRREEKKRAEKERIMNEEDPEKQRRLEEAALRREQKKLEKKQ) the composition is skewed to basic and acidic residues. Residues 450–483 (PEKQRRLEEAALRREQKKLEKKQMKMKQIKVKAM) are a coiled coil. The span at 473 to 483 (MKMKQIKVKAM) shows a compositional bias: basic residues.

The protein belongs to the CCDC47 family. As to quaternary structure, component of the PAT complex, composed of WDR83OS/Asterix and CCDC47. The PAT complex is part of the multi-pass translocon (MPT) complex, composed of three subcomplexes, the GEL complex (composed of RAB5IF/OPTI and TMCO1), the BOS complex (composed of NCLN/Nicalin, NOMO1 and TMEM147) and the PAT complex (composed of WDR83OS/Asterix and CCDC47). The MPT complex associates with the SEC61 complex. Interacts with VCP, HSPA5, DERL1, DERL2 and SELENOS.

It localises to the endoplasmic reticulum membrane. Its subcellular location is the rough endoplasmic reticulum membrane. Component of the multi-pass translocon (MPT) complex that mediates insertion of multi-pass membrane proteins into the lipid bilayer of membranes. The MPT complex takes over after the SEC61 complex: following membrane insertion of the first few transmembrane segments of proteins by the SEC61 complex, the MPT complex occludes the lateral gate of the SEC61 complex to promote insertion of subsequent transmembrane regions. Within the MPT complex, the PAT subcomplex sequesters any highly polar regions in the transmembrane domains away from the non-polar membrane environment until they can be buried in the interior of the fully assembled protein. Within the PAT subcomplex, CCDC47 occludes the lateral gate of the SEC61 complex. Involved in the regulation of calcium ion homeostasis in the ER. Required for proper protein degradation via the ERAD (ER-associated degradation) pathway. Has an essential role in the maintenance of ER organization during embryogenesis. This is PAT complex subunit CCDC47 (CCDC47) from Bos taurus (Bovine).